Reading from the N-terminus, the 194-residue chain is uncharacterized protein (194 aa).

The protein belongs to the mimivirus R457/R459 family.

It is found in the virion. This is an uncharacterized protein from Acanthamoeba polyphaga mimivirus (APMV).